The following is a 215-amino-acid chain: RNA pyrophosphohydrolase (215 aa).

Residues 6–149 (GFRPNVGIIL…KRDVYQLALT (144 aa)) enclose the Nudix hydrolase domain. The Nudix box signature appears at 38–59 (GGIKYGETPMQAMYRELHEETG).

It belongs to the Nudix hydrolase family. RppH subfamily. A divalent metal cation is required as a cofactor.

Accelerates the degradation of transcripts by removing pyrophosphate from the 5'-end of triphosphorylated RNA, leading to a more labile monophosphorylated state that can stimulate subsequent ribonuclease cleavage. The protein is RNA pyrophosphohydrolase of Burkholderia multivorans (strain ATCC 17616 / 249).